Here is a 362-residue protein sequence, read N- to C-terminus: 3-dehydroquinate synthase (362 aa).

Residues 71-76, 105-109, 129-130, Lys142, Lys151, and 169-172 contribute to the NAD(+) site; these read DGEQYK, GVVGD, TT, and CLKT. Glu184, His247, and His264 together coordinate Zn(2+).

This sequence belongs to the sugar phosphate cyclases superfamily. Dehydroquinate synthase family. Co(2+) serves as cofactor. Requires Zn(2+) as cofactor. NAD(+) is required as a cofactor.

It localises to the cytoplasm. The catalysed reaction is 7-phospho-2-dehydro-3-deoxy-D-arabino-heptonate = 3-dehydroquinate + phosphate. It functions in the pathway metabolic intermediate biosynthesis; chorismate biosynthesis; chorismate from D-erythrose 4-phosphate and phosphoenolpyruvate: step 2/7. In terms of biological role, catalyzes the conversion of 3-deoxy-D-arabino-heptulosonate 7-phosphate (DAHP) to dehydroquinate (DHQ). This is 3-dehydroquinate synthase from Shigella dysenteriae serotype 1 (strain Sd197).